The following is a 703-amino-acid chain: DNA ligase (703 aa).

NAD(+) contacts are provided by residues 54–58 (DAEYD), 103–104 (SL), and E132. K134 functions as the N6-AMP-lysine intermediate in the catalytic mechanism. The NAD(+) site is built by R155, E192, K308, and K332. 4 residues coordinate Zn(2+): C426, C429, C444, and C450. Residues 608–698 (EGPGPLDGVV…ADAARALAVP (91 aa)) form the BRCT domain.

Belongs to the NAD-dependent DNA ligase family. LigA subfamily. Mg(2+) is required as a cofactor. It depends on Mn(2+) as a cofactor.

It catalyses the reaction NAD(+) + (deoxyribonucleotide)n-3'-hydroxyl + 5'-phospho-(deoxyribonucleotide)m = (deoxyribonucleotide)n+m + AMP + beta-nicotinamide D-nucleotide.. Its function is as follows. DNA ligase that catalyzes the formation of phosphodiester linkages between 5'-phosphoryl and 3'-hydroxyl groups in double-stranded DNA using NAD as a coenzyme and as the energy source for the reaction. It is essential for DNA replication and repair of damaged DNA. This is DNA ligase from Parafrankia sp. (strain EAN1pec).